A 1024-amino-acid chain; its full sequence is Beta-galactosidase (1024 aa).

The substrate site is built by Asn103 and Asp202. Asp202 lines the Na(+) pocket. Mg(2+)-binding residues include Glu417, His419, and Glu462. Substrate-binding positions include Glu462 and 538-541; that span reads EYAH. The Proton donor role is filled by Glu462. The active-site Nucleophile is Glu538. Residue Asn598 participates in Mg(2+) binding. Positions 602 and 605 each coordinate Na(+). Substrate-binding residues include Asn605 and Trp1000.

Belongs to the glycosyl hydrolase 2 family. Homotetramer. The cofactor is Mg(2+). Requires Na(+) as cofactor.

It carries out the reaction Hydrolysis of terminal non-reducing beta-D-galactose residues in beta-D-galactosides.. The polypeptide is Beta-galactosidase (Escherichia coli O157:H7).